Consider the following 1113-residue polypeptide: Potassium channel subfamily U member 1 (1113 aa).

Topologically, residues 1–24 are extracellular; sequence MSQTLLDNLNKKELTETSCTIEIQ. Residues 25 to 45 traverse the membrane as a helical segment; sequence AAFILSSLATFFGGLIVLFIF. Topologically, residues 46 to 101 are cytoplasmic; that stretch reads RIALKISRNWKTVKGPRGILELFSSRRIEVNPLRKLYFHGVFRERIEMLLSAQTIV. The helical transmembrane segment at 102–122 threads the bilayer; that stretch reads GQVLVILVFVLSIGSLVIYFI. The Extracellular segment spans residues 123-137; that stretch reads NSMDPVRKCSSYEDK. The helical transmembrane segment at 138 to 158 threads the bilayer; sequence IVHVDLSFNAFFSFYFGLRFW. Residues 159–165 are Cytoplasmic-facing; the sequence is AAEDKIK. A helical transmembrane segment spans residues 166 to 186; it reads FWLEMNSIVDIFTIPPTFISY. Residues 187–188 lie on the Extracellular side of the membrane; that stretch reads YL. The chain crosses the membrane as a helical; Voltage-sensor span at residues 189–209; the sequence is KSNWLGLRFLRALRLLELPKI. Residues 210 to 226 are Cytoplasmic-facing; sequence LQILQVIKTSNSVKLSK. A helical membrane pass occupies residues 227–247; the sequence is LMSIVISTWFTAAGFLHLVEN. Residues 248-259 are Extracellular-facing; that stretch reads SGDPWLNGRNSQ. The segment at residues 260–282 is an intramembrane region (pore-forming); the sequence is TMSYFESIYLVTATMSTVGFGDV. Over 283–290 the chain is Extracellular; it reads VAKTSLGR. The chain crosses the membrane as a helical span at residues 291–311; it reads IFIVFFTLGSLILFANYIPEM. The Cytoplasmic segment spans residues 312 to 1113; the sequence is VELFSTRKKY…FDASDIDPGK (802 aa). RCK N-terminal domains are found at residues 331–473 and 710–881; these read KKFI…DNII and QNHI…DEAI. Polar residues predominate over residues 1047-1081; it reads ASIQDQDTTTNVTSMSQGSNFQGAQSALNEHSLSP. Positions 1047 to 1091 are disordered; it reads ASIQDQDTTTNVTSMSQGSNFQGAQSALNEHSLSPASAMGEKKSP.

The protein belongs to the potassium channel family. Calcium-activated (TC 1.A.1.3) subfamily. KCa1.1/KCNMA1 sub-subfamily. Homotetramer; which constitutes the activated potassium channel. Interacts with LRRC52; this interaction changes channel gating properties, such as shifting gating to more negative potentials at a given pH.

It localises to the cell membrane. The protein localises to the cell projection. It is found in the cilium. The protein resides in the flagellum membrane. It catalyses the reaction K(+)(in) = K(+)(out). With respect to regulation, regulated by changes in cytosolic pH; activated by alkalization. Not activated by intracellular Ca(2+). VU0546110 acts as a selective inhibitor. The auxiliary subunit LRRC52 shifts the activation of KCNU1 to more negative potentials at a given pH. In terms of biological role, testis-specific potassium channel activated by both intracellular pH and membrane voltage that mediates export of K(+). Represents the primary spermatozoan K(+) current. The channel underlies a pH-triggered membrane hyperpolarization during the process of sperm capacitation, as sperm encounter the alkaline environment near the ovum in the female reproductive tract, thereby playing an essential for male fertility. This chain is Potassium channel subfamily U member 1 (Kcnu1), found in Rattus norvegicus (Rat).